The primary structure comprises 82 residues: MSDKARTLQGKVISNKMDKSITVAIERQVKHPIYGKYIKRTTKIHAHDETNQCNEGDFVAISQCRPLSKTKSWTLAEVVTKA.

Belongs to the universal ribosomal protein uS17 family. In terms of assembly, part of the 30S ribosomal subunit.

Functionally, one of the primary rRNA binding proteins, it binds specifically to the 5'-end of 16S ribosomal RNA. This chain is Small ribosomal subunit protein uS17, found in Shewanella frigidimarina (strain NCIMB 400).